A 757-amino-acid polypeptide reads, in one-letter code: Endonuclease MutS2 (757 aa).

321–328 (GPNMGGKT) is an ATP binding site. The Smr domain occupies 681–756 (IDIRGMTVEE…GTGVTVVEVE (76 aa)).

This sequence belongs to the DNA mismatch repair MutS family. MutS2 subfamily. In terms of assembly, homodimer. Binds to stalled ribosomes, contacting rRNA.

In terms of biological role, endonuclease that is involved in the suppression of homologous recombination and thus may have a key role in the control of bacterial genetic diversity. Its function is as follows. Acts as a ribosome collision sensor, splitting the ribosome into its 2 subunits. Detects stalled/collided 70S ribosomes which it binds and splits by an ATP-hydrolysis driven conformational change. Acts upstream of the ribosome quality control system (RQC), a ribosome-associated complex that mediates the extraction of incompletely synthesized nascent chains from stalled ribosomes and their subsequent degradation. Probably generates substrates for RQC. The polypeptide is Endonuclease MutS2 (Thermotoga neapolitana (strain ATCC 49049 / DSM 4359 / NBRC 107923 / NS-E)).